A 457-amino-acid chain; its full sequence is GTPase Der (457 aa).

EngA-type G domains follow at residues 4-169 (PTIA…PENN) and 177-352 (IMMS…NQHR). GTP is bound by residues 10–17 (GRPNVGKS), 57–61 (DTGGL), 120–123 (NKCE), 183–190 (GRPNVGKS), 230–234 (DTAGI), and 295–298 (NKWD). One can recognise a KH-like domain in the interval 353–438 (RRVTTSVVNE…PLILLWRGKQ (86 aa)).

It belongs to the TRAFAC class TrmE-Era-EngA-EngB-Septin-like GTPase superfamily. EngA (Der) GTPase family. As to quaternary structure, associates with the 50S ribosomal subunit.

Its function is as follows. GTPase that plays an essential role in the late steps of ribosome biogenesis. The sequence is that of GTPase Der from Prochlorococcus marinus (strain AS9601).